The following is a 188-amino-acid chain: Protein CRIPTO3 (188 aa).

The region spanning 78-107 (LNRTCCLNGGTCMLESFCACPPSFYGRNCE) is the EGF-like domain. A glycan (N-linked (GlcNAc...) asparagine) is linked at Asn79. Disulfide bonds link Cys82/Cys89, Cys83/Cys95, Cys97/Cys106, Cys115/Cys133, Cys128/Cys149, and Cys131/Cys140.

This sequence belongs to the EGF-CFC (Cripto-1/FRL1/Cryptic) family. As to expression, expressed weakly in lung, colon and breast. Expressed also strongly in primary cancer tissues; lung and colon cancers.

The protein resides in the cell membrane. Could play a role in the determination of the epiblastic cells that subsequently give rise to the mesoderm. Activates the Nodal-dependent signaling pathway. This is Protein CRIPTO3 from Homo sapiens (Human).